We begin with the raw amino-acid sequence, 794 residues long: Phosphoenolpyruvate synthase (794 aa).

Histidine 422 serves as the catalytic Tele-phosphohistidine intermediate. Arginine 512, arginine 579, glutamate 681, glycine 702, serine 703, asparagine 704, and aspartate 705 together coordinate substrate. Glutamate 681 serves as a coordination point for Mg(2+). Aspartate 705 is a binding site for Mg(2+). Residue cysteine 752 is the Proton donor of the active site.

This sequence belongs to the PEP-utilizing enzyme family. The cofactor is Mg(2+).

The enzyme catalyses pyruvate + ATP + H2O = phosphoenolpyruvate + AMP + phosphate + 2 H(+). It functions in the pathway carbohydrate biosynthesis; gluconeogenesis. In terms of biological role, catalyzes the phosphorylation of pyruvate to phosphoenolpyruvate. The polypeptide is Phosphoenolpyruvate synthase (ppsA) (Neisseria meningitidis serogroup B (strain ATCC BAA-335 / MC58)).